Consider the following 289-residue polypeptide: Bifunctional protein FolD (289 aa).

NADP(+) contacts are provided by residues Gly166–Ser168, Ser191, and Ile232.

Belongs to the tetrahydrofolate dehydrogenase/cyclohydrolase family. As to quaternary structure, homodimer.

The catalysed reaction is (6R)-5,10-methylene-5,6,7,8-tetrahydrofolate + NADP(+) = (6R)-5,10-methenyltetrahydrofolate + NADPH. It catalyses the reaction (6R)-5,10-methenyltetrahydrofolate + H2O = (6R)-10-formyltetrahydrofolate + H(+). The protein operates within one-carbon metabolism; tetrahydrofolate interconversion. Its function is as follows. Catalyzes the oxidation of 5,10-methylenetetrahydrofolate to 5,10-methenyltetrahydrofolate and then the hydrolysis of 5,10-methenyltetrahydrofolate to 10-formyltetrahydrofolate. This Synechococcus elongatus (strain ATCC 33912 / PCC 7942 / FACHB-805) (Anacystis nidulans R2) protein is Bifunctional protein FolD.